The primary structure comprises 530 residues: Bifunctional purine biosynthesis protein PurH (530 aa).

The region spanning 2–150 (TDHPRRVTRA…KNHDDVAVVV (149 aa)) is the MGS-like domain.

It belongs to the PurH family.

It carries out the reaction (6R)-10-formyltetrahydrofolate + 5-amino-1-(5-phospho-beta-D-ribosyl)imidazole-4-carboxamide = 5-formamido-1-(5-phospho-D-ribosyl)imidazole-4-carboxamide + (6S)-5,6,7,8-tetrahydrofolate. The catalysed reaction is IMP + H2O = 5-formamido-1-(5-phospho-D-ribosyl)imidazole-4-carboxamide. It functions in the pathway purine metabolism; IMP biosynthesis via de novo pathway; 5-formamido-1-(5-phospho-D-ribosyl)imidazole-4-carboxamide from 5-amino-1-(5-phospho-D-ribosyl)imidazole-4-carboxamide (10-formyl THF route): step 1/1. It participates in purine metabolism; IMP biosynthesis via de novo pathway; IMP from 5-formamido-1-(5-phospho-D-ribosyl)imidazole-4-carboxamide: step 1/1. The polypeptide is Bifunctional purine biosynthesis protein PurH (Bradyrhizobium diazoefficiens (strain JCM 10833 / BCRC 13528 / IAM 13628 / NBRC 14792 / USDA 110)).